A 492-amino-acid chain; its full sequence is NADH-quinone oxidoreductase subunit N 2 (492 aa).

Helical transmembrane passes span isoleucine 16–isoleucine 36, proline 44–alanine 64, phenylalanine 87–phenylalanine 107, glycine 118–threonine 138, leucine 140–methionine 160, phenylalanine 175–alanine 195, proline 216–alanine 236, proline 250–leucine 270, phenylalanine 282–valine 302, leucine 309–lysine 329, isoleucine 333–valine 353, alanine 381–phenylalanine 401, valine 416–valine 438, and proline 455–leucine 475.

It belongs to the complex I subunit 2 family. NDH-1 is composed of 14 different subunits. Subunits NuoA, H, J, K, L, M, N constitute the membrane sector of the complex.

The protein localises to the cell inner membrane. It catalyses the reaction a quinone + NADH + 5 H(+)(in) = a quinol + NAD(+) + 4 H(+)(out). Its function is as follows. NDH-1 shuttles electrons from NADH, via FMN and iron-sulfur (Fe-S) centers, to quinones in the respiratory chain. The immediate electron acceptor for the enzyme in this species is believed to be ubiquinone. Couples the redox reaction to proton translocation (for every two electrons transferred, four hydrogen ions are translocated across the cytoplasmic membrane), and thus conserves the redox energy in a proton gradient. In Koribacter versatilis (strain Ellin345), this protein is NADH-quinone oxidoreductase subunit N 2.